Here is a 442-residue protein sequence, read N- to C-terminus: MQKEVNIIGAGLAGCEAAYLLANNGVKVNLFEVKSLMKNDIQKTNDLGELVCSNTLRSKSKKNAAGILKNEMKLLNSLVIKAALENEIPGDDALSVDRFGFSKYITDKIKNHKNINLIEQEVSEVDYTKVTIIASGPLTTDKLGKNIELMTGNEKLFFLDASAPIITKDSIDFNKVYWASRHNDGKDGQYICIPLNEEQFNAFVEELKNAETIKLKSFEKEIYFKGCQPIEQIAKTSKKVLLNGPLSPNNLIDENGNTPFAVVQLRQDDAIDSLYNFVGFQTNIKWPEQKRILQTLPGLENLNIVRFGVMHKNYYINSPKLLNRSLQVKRNKNIFFAGQITGVEGYIESASSGILTAINVLAYLNNIKIEQPSRKSMLGALNFYITNPKHDKLKPMKCNLGILDQQNKNAKSEFYSFDESEREIRRFIKGINNFAKIGENNE.

9–14 (GAGLAG) provides a ligand contact to FAD.

It belongs to the MnmG family. TrmFO subfamily. FAD is required as a cofactor.

It is found in the cytoplasm. It catalyses the reaction uridine(54) in tRNA + (6R)-5,10-methylene-5,6,7,8-tetrahydrofolate + NADH + H(+) = 5-methyluridine(54) in tRNA + (6S)-5,6,7,8-tetrahydrofolate + NAD(+). The catalysed reaction is uridine(54) in tRNA + (6R)-5,10-methylene-5,6,7,8-tetrahydrofolate + NADPH + H(+) = 5-methyluridine(54) in tRNA + (6S)-5,6,7,8-tetrahydrofolate + NADP(+). Functionally, catalyzes the folate-dependent formation of 5-methyl-uridine at position 54 (M-5-U54) in all tRNAs. The sequence is that of Methylenetetrahydrofolate--tRNA-(uracil-5-)-methyltransferase TrmFO 1 from Mesoplasma florum (strain ATCC 33453 / NBRC 100688 / NCTC 11704 / L1) (Acholeplasma florum).